The following is a 398-amino-acid chain: Lysophosphatidylserine lipase ABHD12 (398 aa).

The segment covering Met1–Cys15 has biased composition (basic and acidic residues). Residues Met1–Gly24 are disordered. The Cytoplasmic segment spans residues Met1–Lys74. A helical transmembrane segment spans residues Ile75–Gly95. The Extracellular portion of the chain corresponds to Ile96–His398. N-linked (GlcNAc...) asparagine glycosylation occurs at Asn123. The active-site Nucleophile is Ser246. Active-site charge relay system residues include Asp333 and His372.

This sequence belongs to the serine esterase family. Post-translationally, glycosylated.

Its subcellular location is the endoplasmic reticulum membrane. The protein localises to the mitochondrion. The catalysed reaction is 1-(9Z-octadecenoyl)-sn-glycero-3-phospho-L-serine + H2O = sn-glycero-3-phospho-L-serine + (9Z)-octadecenoate + H(+). It catalyses the reaction 1-(9Z-octadecenoyl)-sn-glycero-3-phospho-(1'-sn-glycerol) + H2O = sn-glycero-3-phospho-(1'-sn-glycerol) + (9Z)-octadecenoate + H(+). It carries out the reaction 1-(9Z-octadecenoyl)-sn-glycero-3-phospho-(1D-myo-inositol) + H2O = sn-glycero-3-phospho-1D-myo-inositol + (9Z)-octadecenoate + H(+). The enzyme catalyses 1-(9Z-octadecenoyl)-sn-glycero-3-phosphoethanolamine + H2O = sn-glycero-3-phosphoethanolamine + (9Z)-octadecenoate + H(+). The catalysed reaction is 1-(9Z-octadecenoyl)-sn-glycero-3-phosphocholine + H2O = 1-(9Z-octadecenoyl)-sn-glycerol + phosphocholine + H(+). It catalyses the reaction 2-(9Z-octadecenoyl)-glycerol + H2O = glycerol + (9Z)-octadecenoate + H(+). It carries out the reaction 1-hexadecanoyl-sn-glycero-3-phospho-L-serine + H2O = sn-glycero-3-phospho-L-serine + hexadecanoate + H(+). The enzyme catalyses 2-(5Z,8Z,11Z,14Z-eicosatetraenoyl)-glycerol + H2O = glycerol + (5Z,8Z,11Z,14Z)-eicosatetraenoate + H(+). The catalysed reaction is Hydrolyzes glycerol monoesters of long-chain fatty acids.. It catalyses the reaction 1-decanoylglycerol + H2O = decanoate + glycerol + H(+). It carries out the reaction 1-dodecanoylglycerol + H2O = dodecanoate + glycerol + H(+). The enzyme catalyses 1-tetradecanoylglycerol + H2O = tetradecanoate + glycerol + H(+). The catalysed reaction is 2-hexadecanoylglycerol + H2O = glycerol + hexadecanoate + H(+). It catalyses the reaction 1-(9Z-octadecenoyl)-glycerol + H2O = glycerol + (9Z)-octadecenoate + H(+). It carries out the reaction 2-(9Z,12Z-octadecadienoyl)-glycerol + H2O = (9Z,12Z)-octadecadienoate + glycerol + H(+). The enzyme catalyses 1-(5Z,8Z,11Z,14Z-eicosatetraenoyl)-glycerol + H2O = glycerol + (5Z,8Z,11Z,14Z)-eicosatetraenoate + H(+). The catalysed reaction is 1-(9Z,12Z-octadecadienoyl)-glycerol + H2O = (9Z,12Z)-octadecadienoate + glycerol + H(+). It catalyses the reaction 1-hexadecanoylglycerol + H2O = glycerol + hexadecanoate + H(+). It carries out the reaction 1-octadecanoylglycerol + H2O = octadecanoate + glycerol + H(+). The enzyme catalyses 1-octadecanoyl-2-(9,10-epoxyoctadecanoyl)-sn-glycero-3-phospho-L-serine + H2O = 9,10-epoxyoctadecanoate + 1-octadecanoyl-sn-glycero-3-phosphoserine + H(+). The catalysed reaction is 1-octadecanoyl-2-(10-hydroxyoctadecanoyl)-sn-glycero-3-phospho-L-serine + H2O = 1-octadecanoyl-sn-glycero-3-phosphoserine + 10-hydroxyoctadecanoate + H(+). It catalyses the reaction 1-hexadecanoyl-2-(10-hydroxyoctadecanoyl)-sn-glycero-3-phospho-L-serine + H2O = 10-hydroxyoctadecanoate + 1-hexadecanoyl-sn-glycero-3-phospho-L-serine + H(+). With respect to regulation, selectively inhibited by DO264 (N-3-pyridyl-N'-(1-[3-chloro-4-{2-chloro-4-(trifluoromethoxy)phenoxy}pyridine-2-yl]piperidin-4-yl)thiourea). Functionally, lysophosphatidylserine (LPS) lipase that mediates the hydrolysis of lysophosphatidylserine, a class of signaling lipids that regulates immunological and neurological processes. Represents a major lysophosphatidylserine lipase in the brain, thereby playing a key role in the central nervous system. Also able to hydrolyze oxidized phosphatidylserine; oxidized phosphatidylserine is produced in response to severe inflammatory stress and constitutes a proapoptotic 'eat me' signal. Also has monoacylglycerol (MAG) lipase activity: hydrolyzes 2-arachidonoylglycerol (2-AG), thereby acting as a regulator of endocannabinoid signaling pathways. Has a strong preference for very-long-chain lipid substrates; substrate specificity is likely due to improved catalysis and not improved substrate binding. This chain is Lysophosphatidylserine lipase ABHD12, found in Mus musculus (Mouse).